A 389-amino-acid polypeptide reads, in one-letter code: Succinate--CoA ligase [ADP-forming] subunit beta (389 aa).

Residues 9-236 (RDMFEAHGVP…KDAADPLEAK (228 aa)) form the ATP-grasp domain. ATP-binding positions include Lys-45, 52–54 (GRG), Ala-94, and Glu-99. Mg(2+) contacts are provided by Asn-191 and Asp-205. Residues Asn-256 and 318-320 (GIT) contribute to the substrate site.

This sequence belongs to the succinate/malate CoA ligase beta subunit family. As to quaternary structure, heterotetramer of two alpha and two beta subunits. Requires Mg(2+) as cofactor.

It catalyses the reaction succinate + ATP + CoA = succinyl-CoA + ADP + phosphate. The enzyme catalyses GTP + succinate + CoA = succinyl-CoA + GDP + phosphate. It participates in carbohydrate metabolism; tricarboxylic acid cycle; succinate from succinyl-CoA (ligase route): step 1/1. Its function is as follows. Succinyl-CoA synthetase functions in the citric acid cycle (TCA), coupling the hydrolysis of succinyl-CoA to the synthesis of either ATP or GTP and thus represents the only step of substrate-level phosphorylation in the TCA. The beta subunit provides nucleotide specificity of the enzyme and binds the substrate succinate, while the binding sites for coenzyme A and phosphate are found in the alpha subunit. This Paenarthrobacter aurescens (strain TC1) protein is Succinate--CoA ligase [ADP-forming] subunit beta.